A 181-amino-acid polypeptide reads, in one-letter code: Protein Abitram (181 aa).

This sequence belongs to the ABITRAM family. As to quaternary structure, interacts with F-actin. Interacts with G-actin.

The protein localises to the nucleus speckle. It localises to the cell projection. It is found in the lamellipodium. Its subcellular location is the nucleus. The protein resides in the growth cone. The protein localises to the dendrite. Its function is as follows. Actin-binding protein that regulates actin polymerization, filopodia dynamics and increases the branching of proximal dendrites of developing neurons. This chain is Protein Abitram, found in Homo sapiens (Human).